The primary structure comprises 535 residues: CTP synthase (535 aa).

An amidoligase domain region spans residues 1–267 (MTKYIFVTGG…DQIVCDHLKL (267 aa)). Ser13 is a CTP binding site. Ser13 is a UTP binding site. 14–19 (SLGKGI) is an ATP binding site. Tyr54 contributes to the L-glutamine binding site. Asp71 provides a ligand contact to ATP. Residues Asp71 and Glu141 each contribute to the Mg(2+) site. CTP-binding positions include 148–150 (DIE), 188–193 (KTKPTQ), and Lys224. UTP is bound by residues 188–193 (KTKPTQ) and Lys224. 240 to 242 (RDA) contributes to the ATP binding site. One can recognise a Glutamine amidotransferase type-1 domain in the interval 292–534 (KIALVGKYVE…VRASITNKES (243 aa)). Residue Gly354 coordinates L-glutamine. Residue Cys381 is the Nucleophile; for glutamine hydrolysis of the active site. Residues 382 to 385 (LGMQ), Glu405, and Arg462 contribute to the L-glutamine site. Active-site residues include His507 and Glu509.

Belongs to the CTP synthase family. In terms of assembly, homotetramer.

The catalysed reaction is UTP + L-glutamine + ATP + H2O = CTP + L-glutamate + ADP + phosphate + 2 H(+). The enzyme catalyses L-glutamine + H2O = L-glutamate + NH4(+). It carries out the reaction UTP + NH4(+) + ATP = CTP + ADP + phosphate + 2 H(+). The protein operates within pyrimidine metabolism; CTP biosynthesis via de novo pathway; CTP from UDP: step 2/2. With respect to regulation, allosterically activated by GTP, when glutamine is the substrate; GTP has no effect on the reaction when ammonia is the substrate. The allosteric effector GTP functions by stabilizing the protein conformation that binds the tetrahedral intermediate(s) formed during glutamine hydrolysis. Inhibited by the product CTP, via allosteric rather than competitive inhibition. Its function is as follows. Catalyzes the ATP-dependent amination of UTP to CTP with either L-glutamine or ammonia as the source of nitrogen. Regulates intracellular CTP levels through interactions with the four ribonucleotide triphosphates. The polypeptide is CTP synthase (Bacillus cereus (strain ATCC 14579 / DSM 31 / CCUG 7414 / JCM 2152 / NBRC 15305 / NCIMB 9373 / NCTC 2599 / NRRL B-3711)).